The chain runs to 214 residues: Thymidylate kinase (214 aa).

G12–S19 lines the ATP pocket.

Belongs to the thymidylate kinase family.

It carries out the reaction dTMP + ATP = dTDP + ADP. Its function is as follows. Phosphorylation of dTMP to form dTDP in both de novo and salvage pathways of dTTP synthesis. The protein is Thymidylate kinase of Gluconobacter oxydans (strain 621H) (Gluconobacter suboxydans).